Consider the following 204-residue polypeptide: Leucyl/phenylalanyl-tRNA--protein transferase (204 aa).

It belongs to the L/F-transferase family.

The protein localises to the cytoplasm. It carries out the reaction N-terminal L-lysyl-[protein] + L-leucyl-tRNA(Leu) = N-terminal L-leucyl-L-lysyl-[protein] + tRNA(Leu) + H(+). The enzyme catalyses N-terminal L-arginyl-[protein] + L-leucyl-tRNA(Leu) = N-terminal L-leucyl-L-arginyl-[protein] + tRNA(Leu) + H(+). It catalyses the reaction L-phenylalanyl-tRNA(Phe) + an N-terminal L-alpha-aminoacyl-[protein] = an N-terminal L-phenylalanyl-L-alpha-aminoacyl-[protein] + tRNA(Phe). In terms of biological role, functions in the N-end rule pathway of protein degradation where it conjugates Leu, Phe and, less efficiently, Met from aminoacyl-tRNAs to the N-termini of proteins containing an N-terminal arginine or lysine. This is Leucyl/phenylalanyl-tRNA--protein transferase from Agrobacterium fabrum (strain C58 / ATCC 33970) (Agrobacterium tumefaciens (strain C58)).